We begin with the raw amino-acid sequence, 3423 residues long: Genome polyprotein (3423 aa).

The segment at 1 to 25 (MKNPKKKSGGFRIVNMLKRGVARVS) is disordered. Residues 1-104 (MKNPKKKSGG…INARKEKKRR (104 aa)) lie on the Cytoplasmic side of the membrane. The hydrophobic; homodimerization of capsid protein C stretch occupies residues 37–72 (LLLGHGPIRMVLAILAFLRFTAIKPSLGLINRWGSV). Positions 105-122 (GTDTSVGIVGLLLTTAMA) are cleaved as a propeptide — ER anchor for capsid protein C, removed in mature form by serine protease NS3. The helical transmembrane segment at 105-125 (GTDTSVGIVGLLLTTAMAVEV) threads the bilayer. Over 126 to 249 (TRRGNAYYMY…YTKHLIRVEN (124 aa)) the chain is Extracellular. N-linked (GlcNAc...) asparagine; by host glycosylation is present at N192. Residues 250-269 (WIFRNPGFALAAAAIAWLLG) form a helical membrane-spanning segment. At 270 to 274 (SSTSQ) the chain is on the cytoplasmic side. The helical transmembrane segment at 275-290 (KVIYLVMILLIAPAYS) threads the bilayer. At 291–745 (IRCIGVSNRD…HQIFGAAFKS (455 aa)) the chain is on the extracellular side. Residue K328 forms a Glycyl lysine isopeptide (Lys-Gly) (interchain with G-Cter in ubiquitin) linkage. 2 disulfide bridges follow: C350/C406 and C382/C411. A fusion peptide region spans residues 388-401 (DRGWGNGCGLFGKG). An N-linked (GlcNAc...) asparagine; by host glycan is attached at N444. 2 disulfide bridges follow: C480–C581 and C598–C629. Residue K571 forms a Glycyl lysine isopeptide (Lys-Gly) (interchain with G-Cter in ubiquitin) linkage. The helical transmembrane segment at 746–767 (LFGGMSWFSQILIGTLLVWLGL) threads the bilayer. Residues 768 to 773 (NTKNGS) are Cytoplasmic-facing. A helical transmembrane segment spans residues 774–794 (ISLMCLALGGVLIFLSTAVSA). The Lumenal segment spans residues 795–1177 (DVGCSVDFSK…EGLKKRMTTK (383 aa)). Cystine bridges form between C798–C809, C849–C937, C973–C1017, C1074–C1123, C1085–C1106, and C1107–C1110. N924 and N1001 each carry an N-linked (GlcNAc...) asparagine; by host glycan. The helical transmembrane segment at 1178–1198 (IIISTSMAVLVAMILGGFSMS) threads the bilayer. Over 1199–1220 (DLAKLAILMGATFAEMNTGGDV) the chain is Cytoplasmic. The helical transmembrane segment at 1221–1241 (AHLALIAAFKVRPALLVSFIF) threads the bilayer. Topologically, residues 1242–1270 (RANWTPRESMLLALASCLLQTAISALEGD) are lumenal. The helical transmembrane segment at 1271–1291 (LMVPINGFALAWLAIRAMVVP) threads the bilayer. Over 1292–1295 (RTDN) the chain is Cytoplasmic. Residues 1296–1316 (ITLAILAALTPLARGTLLVAW) form a helical membrane-spanning segment. At 1317–1345 (RAGLATCGGFMLLSLKGKGSVKKNLPFVM) the chain is on the lumenal side. Residues 1346–1366 (ALGLTAVRLVDPINVVGLLLL) traverse the membrane as a helical segment. The Cytoplasmic portion of the chain corresponds to 1367–1373 (TRSGKRS). Residues 1374 to 1394 (WPPSEVLTAVGLICALAGGFA) traverse the membrane as a helical segment. Over 1395-1397 (KAD) the chain is Lumenal. A helical transmembrane segment spans residues 1398-1418 (IEMAGPMAAVGLLIVSYVVSG). Topologically, residues 1419–1472 (KSVDMYIERAGDITWEKDAEVTGNSPRLDVALDESGDFSLVEDDGPPMREIILK) are cytoplasmic. Residues 1425 to 1464 (IERAGDITWEKDAEVTGNSPRLDVALDESGDFSLVEDDGP) form an interacts with and activates NS3 protease region. The disordered stretch occupies residues 1429 to 1451 (GDITWEKDAEVTGNSPRLDVALD). The helical intramembrane region spans 1473 to 1493 (VVLMAICGMNPIAIPFAAGAW). At 1494–2170 (YVYVKTGKRS…KAAAAQLPET (677 aa)) the chain is on the lumenal side. The region spanning 1503 to 1680 (SGALWDVPAP…RREEETPVEC (178 aa)) is the Peptidase S7 domain. Residues H1553, D1577, and S1637 each act as charge relay system; for serine protease NS3 activity in the active site. A Helicase ATP-binding domain is found at 1683–1839 (PSMLKKKQLT…DSNSPIMDTE (157 aa)). The segment at 1687–1690 (KKKQ) is important for RNA-binding. 1696-1703 (LHPGAGKT) contacts ATP. Positions 1787-1790 (DEAH) match the DEAH box motif. The Helicase C-terminal domain maps to 1834–2013 (PIMDTEVEVP…GLIASLYRPE (180 aa)). N6-acetyllysine; by host is present on K1891. The helical transmembrane segment at 2171–2191 (LETIMLLGLLGTVSLGIFFVL) threads the bilayer. At 2192–2195 (MRNK) the chain is on the lumenal side. Positions 2196-2216 (GIGKMGFGMVTLGASAWLMWL) form an intramembrane region, helical. At 2217–2218 (SE) the chain is on the cytoplasmic side. A helical membrane pass occupies residues 2219 to 2239 (IEPARIACVLIVVFLLLVVLI). Topologically, residues 2240 to 2254 (PEPEKQRSPQDNQMA) are lumenal. The helical intramembrane region spans 2255 to 2269 (IIIMVAVGLLGLITA). The Lumenal portion of the chain corresponds to 2270 to 2307 (NELGWLERTKSDLSHLMGRREEGATIGFSMDIDLRPAS). The segment at residues 2308–2328 (AWAIYAALTTFITPAVQHAVT) is an intramembrane region (helical). Over 2329-2344 (TSYNNYSLMAMATQAG) the chain is Lumenal. A helical transmembrane segment spans residues 2345–2365 (VLFGMGKGMPFYAWDFGVPLL). The Cytoplasmic segment spans residues 2366–2375 (MIGCYSQLTP). Residues 2376 to 2396 (LTLIVAIILLVAHYMYLIPGL) traverse the membrane as a helical segment. Topologically, residues 2397–2441 (QAAAARAAQKRTAAGIMKNPVVDGIVVTDIDTMTIDPQVEKKMGQ) are lumenal. The chain crosses the membrane as a helical span at residues 2442-2462 (VLLIAVAVSSAILSRTAWGWG). Residues 2463-3423 (EAGALITAAT…GEEGSTPGVL (961 aa)) are Cytoplasmic-facing. One can recognise an mRNA cap 0-1 NS5-type MT domain in the interval 2521 to 2785 (GGGTGETLGE…DVNLGSGTRA (265 aa)). Position 2533–2539 (2533–2539 (KARLNQM)) interacts with GTP. Residue S2576 coordinates S-adenosyl-L-methionine. S2576 is subject to Phosphoserine. The For 2'-O-MTase activity role is filled by K2581. Residues 2597-2600 (VIDL) are SUMO-interacting motif (SIM). Residues G2606, W2607, T2624, K2625, H2630, E2631, D2651, V2652, D2666, and I2667 each contribute to the S-adenosyl-L-methionine site. D2666 acts as the For 2'-O-MTase activity in catalysis. GTP is bound at residue 2669–2675 (ESSSSPE). Residue K2702 is the For 2'-O-MTase activity of the active site. 2733–2735 (RNS) is a GTP binding site. Catalysis depends on E2738, which acts as the For 2'-O-MTase activity. Y2740 is a binding site for S-adenosyl-L-methionine. The Nuclear localization signal (NLS) motif lies at 2908–2914 (KHKRPRV). Residues E2959, H2963, C2968, and C2971 each contribute to the Zn(2+) site. The RdRp catalytic domain occupies 3049 to 3199 (GRMYADDTAG…KPIDDRFAHA (151 aa)). H3234, C3250, and C3369 together coordinate Zn(2+).

This sequence in the N-terminal section; belongs to the class I-like SAM-binding methyltransferase superfamily. mRNA cap 0-1 NS5-type methyltransferase family. In terms of assembly, homodimer. Interacts with host SERTAD3; this interaction promotes capsid protein C degradation. Interacts with host CAPRIN1; this interaction is probably linked to the inhibition of stress granules formation by the virus. Interacts with host G3BP1; this interaction is probably linked to the inhibition of stress granules formation by the virus. Forms heterodimers with envelope protein E in the endoplasmic reticulum and Golgi. Interacts with non-structural protein 2A. As to quaternary structure, homodimer; in the endoplasmic reticulum and Golgi. Interacts with host TYRO3, AXL and DC-SIGN proteins. Interacts with non-structural protein 2A. Interacts with host HAVCR1; this interaction likely mediates virus attachment to host cell. Interacts with host NCAM1. Interacts with host HSPA5. Interacts with Aedes aegypti SRPN25, APY and venom allergen-1 salivary proteins; the interactions do not affect Zika virus replication in human endothelial cells and keratinocytes. In terms of assembly, homodimer; Homohexamer when secreted. Interacts with host TBK1. Interacts with host USP8. Interacts with envelope protein E. Interacts with the structural protein prM/E complex, and the NS2B/NS3 protease complex. As to quaternary structure, forms a heterodimer with serine protease NS3. May form homooligomers. Interacts with human SPCS1. Interacts with non-structural protein 2A. In terms of assembly, forms a heterodimer with NS2B. Interacts with NS4B. Interacts with unphosphorylated RNA-directed RNA polymerase NS5; this interaction stimulates RNA-directed RNA polymerase NS5 guanylyltransferase activity. Interacts with non-structural protein 2A. Interacts with host SHFL; this interaction promotes NS3 degradation via a lysosome-dependent pathway. Interacts with host CEP63; this interaction disorganizes the centrosome and inhibits host innate immune response. May interact with host ANKLE2; the interaction may cause defects in brain development, such as microcephaly. May interact with host SRPRA and SEC61G. As to quaternary structure, interacts with serine protease NS3. Interacts with NS1. In terms of assembly, homodimer. Interacts with host STAT2; this interaction inhibits the phosphorylation of the latter, and, when all viral proteins are present (polyprotein), targets STAT2 for degradation. Interacts with host TBK1 and IKBKE; these interactions lead to the inhibition of the host RIG-I signaling pathway. Interacts with host PAF1 complex; the interaction may prevent the recruitment of the host PAF1 complex to interferon-responsive genes, and thus reduces the immune response. Interacts with serine protease NS3. Interacts with host KPNA2. Interacts with host ZSWIM8; this interaction allows STAT2 binding to ZSWIM8 and subsequent proteasomal degradation leading to inhibition of interferon signaling. Specific enzymatic cleavages in vivo yield mature proteins. Cleavages in the lumen of endoplasmic reticulum are performed by host signal peptidase, whereas cleavages in the cytoplasmic side are performed by serine protease NS3. Signal cleavage at the 2K-4B site requires a prior NS3 protease-mediated cleavage at the 4A-2K site. Post-translationally, cleaved in post-Golgi vesicles by a host furin, releasing the mature small envelope protein M, and peptide pr. This cleavage is incomplete as up to 30% of viral particles still carry uncleaved prM. In terms of processing, N-glycosylation plays a role in virulence in mammalian and mosquito hosts, but may have no effect on neurovirulence. Ubiquitination by host TRIM7 promotes virus attachment and fusion of the virus and the host endosome membrane. Post-translationally, N-glycosylated. The excreted form is glycosylated, which is required for efficient secretion of the protein from infected cells. In terms of processing, ubiquitination by host TRIM22 leads to proteasomal degradation. Acetylated by host KAT5. Acetylation modulates NS3 RNA-binding and unwinding activities and plays an important positive role for viral replication. Post-translationally, phosphorylated on serines residues. This phosphorylation may trigger NS5 nuclear localization. In terms of processing, sumoylated, required for regulating IFN induced interferon stimulated genes/ISGs.

It is found in the virion. The protein resides in the host nucleus. The protein localises to the host cytoplasm. Its subcellular location is the host perinuclear region. It localises to the secreted. It is found in the virion membrane. The protein resides in the host endoplasmic reticulum membrane. The protein localises to the host cell surface. It carries out the reaction a 5'-end (5'-triphosphoguanosine)-ribonucleoside in mRNA + S-adenosyl-L-methionine = a 5'-end (N(7)-methyl 5'-triphosphoguanosine)-ribonucleoside in mRNA + S-adenosyl-L-homocysteine. It catalyses the reaction a 5'-end (N(7)-methyl 5'-triphosphoguanosine)-ribonucleoside in mRNA + S-adenosyl-L-methionine = a 5'-end (N(7)-methyl 5'-triphosphoguanosine)-(2'-O-methyl-ribonucleoside) in mRNA + S-adenosyl-L-homocysteine + H(+). The enzyme catalyses RNA(n) + a ribonucleoside 5'-triphosphate = RNA(n+1) + diphosphate. The catalysed reaction is Selective hydrolysis of -Xaa-Xaa-|-Yaa- bonds in which each of the Xaa can be either Arg or Lys and Yaa can be either Ser or Ala.. It carries out the reaction a ribonucleoside 5'-triphosphate + H2O = a ribonucleoside 5'-diphosphate + phosphate + H(+). It catalyses the reaction ATP + H2O = ADP + phosphate + H(+). Plays a role in virus budding by binding to the cell membrane and gathering the viral RNA into a nucleocapsid that forms the core of the mature virus particle. During virus entry, may induce genome penetration into the host cytoplasm after hemifusion induced by the surface proteins. Can migrate to the cell nucleus where it modulates host functions. Inhibits the integrated stress response (ISR) in the infected cell. Functionally, inhibits RNA silencing by interfering with host Dicer. Its function is as follows. Prevents premature fusion activity of envelope proteins in trans-Golgi by binding to envelope protein E at pH 6.0. After virion release in extracellular space, gets dissociated from E dimers. In terms of biological role, plays a role in host immune defense modulation and protection of envelope protein E during virion synthesis. PrM-E cleavage is inefficient, many virions are only partially matured and immature prM-E proteins could play a role in immune evasion. Contributes to fetal microcephaly in humans. Acts as a chaperone for envelope protein E during intracellular virion assembly by masking and inactivating envelope protein E fusion peptide. prM is the only viral peptide matured by host furin in the trans-Golgi network probably to avoid catastrophic activation of the viral fusion activity in acidic Golgi compartment prior to virion release. May play a role in virus budding. Exerts cytotoxic effects by activating a mitochondrial apoptotic pathway through M ectodomain. May display a viroporin activity. Functionally, binds to host cell surface receptors and mediates fusion between viral and cellular membranes. Efficient virus attachment to cell is, at least in part, mediated by host HAVCR1 in a cell-type specific manner. In addition, host NCAM1 can also be used as entry receptor. Interaction with host HSPA5 plays an important role in the early stages of infection as well. Envelope protein is synthesized in the endoplasmic reticulum and forms a heterodimer with protein prM. The heterodimer plays a role in virion budding in the ER, and the newly formed immature particle is covered with 60 spikes composed of heterodimers between precursor prM and envelope protein E. The virion is transported to the Golgi apparatus where the low pH causes the dissociation of PrM-E heterodimers and formation of E homodimers. PrM-E cleavage is inefficient, many virions are only partially matured and immature prM-E proteins could play a role in immune evasion. Its function is as follows. Plays a role in the inhibition of host RLR-induced interferon-beta activation by targeting TANK-binding kinase 1/TBK1. In addition, recruits the host deubiquitinase USP8 to cleave 'Lys-11'-linked polyubiquitin chains from caspase-1/CASP1 thus inhibiting its proteasomal degradation. In turn, stabilized CASP1 promotes cleavage of cGAS, which inhibits its ability to recognize mitochondrial DNA release and initiate type I interferon signaling. In terms of biological role, component of the viral RNA replication complex that recruits genomic RNA, the structural protein prM/E complex, and the NS2B/NS3 protease complex to the virion assembly site and orchestrates virus morphogenesis. Also antagonizes the host alpha/beta interferon antiviral response. May disrupt adherens junction formation and thereby impair proliferation of radial cells in the host cortex. Required cofactor for the serine protease function of NS3. Functionally, displays three enzymatic activities: serine protease, NTPase and RNA helicase. NS3 serine protease, in association with NS2B, performs its autocleavage and cleaves the polyprotein at dibasic sites in the cytoplasm: C-prM, NS2A-NS2B, NS2B-NS3, NS3-NS4A, NS4A-2K and NS4B-NS5. NS3 RNA helicase binds RNA and unwinds dsRNA in the 3' to 5' direction. Leads to translation arrest when expressed ex vivo. Disrupts host centrosome organization in a CEP63-dependent manner to degrade host TBK1 and inhibits innate immune response. Inhibits the integrated stress response (ISR) in the infected cell. Its function is as follows. Regulates the ATPase activity of the NS3 helicase activity. NS4A allows NS3 helicase to conserve energy during unwinding. Cooperatively with NS4B suppresses the Akt-mTOR pathway and leads to cellular dysregulation. By inhibiting host ANKLE2 functions, may cause defects in brain development, such as microcephaly. Also antagonizes the host MDA5-mediated induction of alpha/beta interferon antiviral response. Leads to translation arrest when expressed ex vivo. Inhibits the integrated stress response (ISR) in the infected cell. In terms of biological role, functions as a signal peptide for NS4B and is required for the interferon antagonism activity of the latter. Induces the formation of ER-derived membrane vesicles where the viral replication takes place. Also plays a role in the inhibition of host RLR-induced interferon-beta production at TANK-binding kinase 1/TBK1 level. Cooperatively with NS4A suppresses the Akt-mTOR pathway and leads to cellular dysregulation. Functionally, replicates the viral (+) and (-) RNA genome, and performs the capping of genomes in the cytoplasm. Methylates viral RNA cap at guanine N-7 and ribose 2'-O positions. Once sufficient NS5 is expressed, binds to the cap-proximal structure and inhibits further translation of the viral genome. Besides its role in RNA genome replication, also prevents the establishment of a cellular antiviral state by blocking the interferon-alpha/beta (IFN-alpha/beta) signaling pathway. Mechanistically, interferes with host kinases TBK1 and IKKE upstream of interferon regulatory factor 3/IRF3 to inhibit the RIG-I pathway. Also antagonizes type I interferon signaling by targeting STAT2 for degradation by the proteasome thereby preventing activation of JAK-STAT signaling pathway. Mechanistically, acts as a scaffold protein to connect host ZSWIM8/CUL3 ligase complex and STAT2, leading to STAT2 degradation. Within the host nucleus, disrupts host SUMO1 and STAT2 co-localization with PML, resulting in PML degradation. May also reduce immune responses by preventing the recruitment of the host PAF1 complex to interferon-responsive genes. This Zika virus (isolate ZIKV/Human/Cambodia/FSS13025/2010) (ZIKV) protein is Genome polyprotein.